The following is a 133-amino-acid chain: Small ribosomal subunit protein uS8 (133 aa).

Belongs to the universal ribosomal protein uS8 family. Part of the 30S ribosomal subunit. Contacts proteins S5 and S12.

One of the primary rRNA binding proteins, it binds directly to 16S rRNA central domain where it helps coordinate assembly of the platform of the 30S subunit. This is Small ribosomal subunit protein uS8 from Gloeothece citriformis (strain PCC 7424) (Cyanothece sp. (strain PCC 7424)).